The chain runs to 270 residues: Undecaprenyl-diphosphatase 2 (270 aa).

A run of 8 helical transmembrane segments spans residues Met-1–Val-21, Gln-39–Phe-59, Trp-87–Ile-107, Pro-114–Val-134, Leu-147–Thr-167, Phe-190–Leu-210, Ala-221–Leu-241, and Val-247–Phe-267.

Belongs to the UppP family.

The protein resides in the cell inner membrane. It carries out the reaction di-trans,octa-cis-undecaprenyl diphosphate + H2O = di-trans,octa-cis-undecaprenyl phosphate + phosphate + H(+). Its function is as follows. Catalyzes the dephosphorylation of undecaprenyl diphosphate (UPP). Confers resistance to bacitracin. This is Undecaprenyl-diphosphatase 2 from Stutzerimonas stutzeri (strain A1501) (Pseudomonas stutzeri).